The sequence spans 149 residues: Down syndrome critical region protein 9 (149 aa).

Residues 1-41 (MGRICPVNSRARRLRARPGRPSGDSLPYHQLQGGAPRLWSP) are disordered.

Testis specific.

The sequence is that of Down syndrome critical region protein 9 (DSCR9) from Homo sapiens (Human).